We begin with the raw amino-acid sequence, 87 residues long: Envelope glycoprotein N (87 aa).

The first 24 residues, 1-24, serve as a signal peptide directing secretion; it reads MGSITASFILITMQILFFCEDSSG. Residues 25-48 are Virion surface-facing; that stretch reads EPNFAERNFWHASCSARGVYIDGS. A helical transmembrane segment spans residues 49 to 69; that stretch reads MITTLFFYASLLGVCVALISL. Residues 70–87 lie on the Intravirion side of the membrane; that stretch reads AYHACFRLFTRSVLRSTW.

It belongs to the herpesviridae glycoprotein N family. In terms of assembly, interacts (via N-terminus) with gM (via N-terminus). The gM-gN heterodimer forms the gCII complex.

It is found in the virion membrane. The protein localises to the host membrane. The protein resides in the host Golgi apparatus. It localises to the host trans-Golgi network. In terms of biological role, envelope glycoprotein necessary for proper maturation of gM and modulation of its membrane fusion activity. Also plays a critical role in virion morphogenesis. This Varicella-zoster virus (strain Dumas) (HHV-3) protein is Envelope glycoprotein N.